A 242-amino-acid polypeptide reads, in one-letter code: Protein ABHD14A (242 aa).

A helical; Signal-anchor for type II membrane protein membrane pass occupies residues 6–26; the sequence is AALLGLGLLLMFLLYMGLPGP. N38 is a glycosylation site (N-linked (GlcNAc...) asparagine). Active-site charge relay system residues include S142, D193, and H220.

This sequence belongs to the AB hydrolase superfamily. ABHD14 family.

Its subcellular location is the cytoplasm. The protein resides in the membrane. Functionally, possible role in granule neuron development. In Rattus norvegicus (Rat), this protein is Protein ABHD14A.